Consider the following 520-residue polypeptide: Phosphoenolpyruvate carboxykinase (ATP) (520 aa).

Substrate contacts are provided by R61, F196, and K202. ATP-binding positions include K202, H222, and 238-246 (GLSGTGKTT). Mn(2+) is bound by residues K202 and H222. D259 contributes to the Mn(2+) binding site. Residues E287, R324, 443–444 (RI), and T449 each bind ATP. A substrate-binding site is contributed by R324.

The protein belongs to the phosphoenolpyruvate carboxykinase (ATP) family. The cofactor is Mn(2+).

The protein localises to the cytoplasm. It catalyses the reaction oxaloacetate + ATP = phosphoenolpyruvate + ADP + CO2. Its pathway is carbohydrate biosynthesis; gluconeogenesis. Its function is as follows. Involved in the gluconeogenesis. Catalyzes the conversion of oxaloacetate (OAA) to phosphoenolpyruvate (PEP) through direct phosphoryl transfer between the nucleoside triphosphate and OAA. In Amoebophilus asiaticus (strain 5a2), this protein is Phosphoenolpyruvate carboxykinase (ATP).